A 534-amino-acid polypeptide reads, in one-letter code: MDNNTLFAQSISLKELGIENATVRYQLSADELHAITVQSGQGVEASTGALAINTGEFTGRSPQDRFIVKDSITEDKVWWGNVNIPFAPEAFEKLYNKVKAFLSNKEVFVRDSYVCSDPNYRLNVRVVTETAWSNLFCYNMFLRPEDSELANFTPEWTVVCAPSFMADPAVDGTRQSNFAILDFTKKIALIGGTGYTGEMKKGIFSALNFILPVFENTLPMHCSANVGKDGDTAIFFGLSGTGKTTLSADPERKLIGDDEHGWTAENTVFNFEGGCYAKVINLTEENEPDIFRAIKKGALLENVVFKAGTNEVDFDDVSITQNTRVSYPITHIDNIQPGSIGHNPKNIFFLTADSFGILPPISKLTPGQAAYHFISGYTAKVAGTEAGVTEPQPNFSACFGAPFMPLHPTKYAEMLSKKMKDADVKVWLINTGWTGGAYGTGSRMKLKYTRAMITAALNGELDNVEYVNHKVFGIAKPQSCPNVPSEILNPRNTWEDKDLYDKKALELAQKFKANFAKFEEFANAEILAGAPITE.

Positions 60, 195, and 201 each coordinate substrate. ATP is bound by residues Lys-201, His-221, and 237 to 245 (GLSGTGKTT). Residues Lys-201 and His-221 each coordinate Mn(2+). Asp-258 is a Mn(2+) binding site. Glu-287, Arg-324, and Thr-449 together coordinate ATP. Arg-324 is a binding site for substrate.

It belongs to the phosphoenolpyruvate carboxykinase (ATP) family. Requires Mn(2+) as cofactor.

The protein localises to the cytoplasm. It catalyses the reaction oxaloacetate + ATP = phosphoenolpyruvate + ADP + CO2. Its pathway is carbohydrate biosynthesis; gluconeogenesis. Involved in the gluconeogenesis. Catalyzes the conversion of oxaloacetate (OAA) to phosphoenolpyruvate (PEP) through direct phosphoryl transfer between the nucleoside triphosphate and OAA. This chain is Phosphoenolpyruvate carboxykinase (ATP), found in Flavobacterium johnsoniae (strain ATCC 17061 / DSM 2064 / JCM 8514 / BCRC 14874 / CCUG 350202 / NBRC 14942 / NCIMB 11054 / UW101) (Cytophaga johnsonae).